We begin with the raw amino-acid sequence, 60 residues long: MAVPRRKTSPSRRGMRRSADAIKKPTYVEDKDSGELRRPHHLDLKTGMYKGRQVLKKKES.

The segment covering Met1 to Arg16 has biased composition (basic residues). Positions Met1–Ser60 are disordered. Positions Arg17–Leu44 are enriched in basic and acidic residues.

This sequence belongs to the bacterial ribosomal protein bL32 family.

The chain is Large ribosomal subunit protein bL32 from Bradyrhizobium diazoefficiens (strain JCM 10833 / BCRC 13528 / IAM 13628 / NBRC 14792 / USDA 110).